The following is a 486-amino-acid chain: MRHLLFLCPCVIGVAFHLWLFNFSGLFSWFLVWSPHSYDIVVGVLSARHNHELRNVIRHTWLQHLNHHSSLSQRVLVKFIIGSHGCDIPVEDREDPYSCKLLNITNPTLKQEIESFSIPDSAAVITEHHVVNVNFRVLYPVVITRLGVFQHDSAAGFQRNITVKLFQTEHEEALFSARFSPASSGVQVNGIWYKPVEQFILPEGFEGTVVWESHDPEGLLSGNVHHVIVNDGGGIFRLTTVKEGLLPYEFTEGVEGIAGGFTYTIHEGETLLNTLETRPERIQNHLAALEKEDALLQEESTTFQDIVFVNVVDTYRNVPSKLLNFYRWTVQLTRFEFLLKTDDDCFIDIDNVLKMVAQKELQKENAWWGNFRLNWAVDRTGKWQELEYLSPAYPAFACGSGYIISNDIVQWLAVNSQRLKTYQGEDVSMGIWMSAIGPSRYQDSRWLCEKKCEAGMLSSPQYTPQELMEIWQQKERCGNPCACEDR.

Residues 1–10 (MRHLLFLCPC) are Cytoplasmic-facing. A helical; Signal-anchor for type II membrane protein transmembrane segment spans residues 11 to 31 (VIGVAFHLWLFNFSGLFSWFL). Residues 32–486 (VWSPHSYDIV…CGNPCACEDR (455 aa)) are Lumenal-facing. N-linked (GlcNAc...) asparagine glycans are attached at residues asparagine 103 and asparagine 160.

Belongs to the glycosyltransferase 31 family.

The protein localises to the golgi apparatus membrane. It localises to the endoplasmic reticulum. The enzyme catalyses 3-O-(N-acetyl-beta-D-glucosaminyl-(1-&gt;4)-alpha-D-mannosyl)-L-threonyl-[protein] + UDP-N-acetyl-alpha-D-galactosamine = 3-O-[beta-D-GalNAc-(1-&gt;3)-beta-D-GlcNAc-(1-&gt;4)-alpha-D-Man]-L-Thr-[protein] + UDP + H(+). It functions in the pathway protein modification; protein glycosylation. Its function is as follows. Beta-1,3-N-acetylgalactosaminyltransferase that synthesizes a unique carbohydrate structure, GalNAc-beta-1-3GlcNAc, on N- and O-glycans. Has no galactose nor galactosaminyl transferase activity toward any acceptor substrate. Involved in alpha-dystroglycan (dag1) glycosylation. The protein is UDP-GalNAc:beta-1,3-N-acetylgalactosaminyltransferase 2 (b3galnt2) of Xenopus laevis (African clawed frog).